We begin with the raw amino-acid sequence, 831 residues long: Periplasmic nitrate reductase (831 aa).

A signal peptide (tat-type signal) is located at residues 1 to 29; it reads MTLTRRDLIKAQAAATAAAAAGLPVSALA. Residues 41–97 enclose the 4Fe-4S Mo/W bis-MGD-type domain; the sequence is IRWSKAPCRFCGTGCGVMVGTRDGQVVATHGDTQAEVNRGLNCVKGYFLSKIMYGED. 4 residues coordinate [4Fe-4S] cluster: Cys48, Cys51, Cys55, and Cys83. Mo-bis(molybdopterin guanine dinucleotide) is bound by residues Lys85, Gln152, Asn177, Cys181, 214 to 221, 245 to 249, 264 to 266, Met375, Gln379, Asn485, 511 to 512, Lys534, Asp561, and 721 to 730; these read WGSNMAEM, STFTH, GTD, SD, and TGRVLEHWHS. Trp797 lines the substrate pocket. The Mo-bis(molybdopterin guanine dinucleotide) site is built by Asn805 and Lys822.

Belongs to the prokaryotic molybdopterin-containing oxidoreductase family. NasA/NapA/NarB subfamily. In terms of assembly, component of the periplasmic nitrate reductase NapAB complex composed of NapA and NapB. The cofactor is [4Fe-4S] cluster. Mo-bis(molybdopterin guanine dinucleotide) is required as a cofactor. Post-translationally, predicted to be exported by the Tat system. The position of the signal peptide cleavage has not been experimentally proven.

Its subcellular location is the periplasm. It carries out the reaction 2 Fe(II)-[cytochrome] + nitrate + 2 H(+) = 2 Fe(III)-[cytochrome] + nitrite + H2O. Functionally, catalytic subunit of the periplasmic nitrate reductase complex NapAB. Receives electrons from NapB and catalyzes the reduction of nitrate to nitrite. The sequence is that of Periplasmic nitrate reductase from Cereibacter sphaeroides (strain ATCC 17023 / DSM 158 / JCM 6121 / CCUG 31486 / LMG 2827 / NBRC 12203 / NCIMB 8253 / ATH 2.4.1.) (Rhodobacter sphaeroides).